The sequence spans 126 residues: Large ribosomal subunit protein eL32 (126 aa).

It belongs to the eukaryotic ribosomal protein eL32 family. Part of the 50S ribosomal subunit.

This is Large ribosomal subunit protein eL32 (rpl32e) from Thermococcus kodakarensis (strain ATCC BAA-918 / JCM 12380 / KOD1) (Pyrococcus kodakaraensis (strain KOD1)).